Reading from the N-terminus, the 83-residue chain is Mu-theraphotoxin-Hhn2j 1 (83 aa).

A signal peptide spans 1–21; that stretch reads MKASMFLALAGLVLLFVVGYA. The propeptide occupies 22 to 48; that stretch reads SESEEKEFPIELLSKIFAVDVFKGEER. 3 disulfide bridges follow: Cys50–Cys65, Cys57–Cys70, and Cys64–Cys77. Leucine amide is present on Leu81.

Belongs to the neurotoxin 10 (Hwtx-1) family. 15 (Hntx-3) subfamily. Monomer. In terms of tissue distribution, expressed by the venom gland.

The protein localises to the secreted. Lethal neurotoxin. Selectively blocks tetrodotoxin-sensitive voltage-gated sodium channels (Nav). Does not affect tetrodotoxin-resistant voltage-gated sodium channels or calcium channels. In Cyriopagopus hainanus (Chinese bird spider), this protein is Mu-theraphotoxin-Hhn2j 1.